We begin with the raw amino-acid sequence, 402 residues long: Multidrug resistance protein MdtG (402 aa).

The next 11 helical transmembrane spans lie at 14–34 (LYIV…IMPF), 52–72 (LWTG…APFW), 90–110 (LGMA…QLLI), 113–133 (ALLG…ATQV), 149–169 (AVSG…LYGL), 171–191 (PVFF…LFFV), 219–239 (VICL…VTPI), 254–274 (LAFI…ISAP), 288–308 (VLIF…LVSN), 318–338 (LLGA…LYNI), and 376–396 (AVFY…WISF).

Belongs to the major facilitator superfamily. DHA1 family. MdtG (TC 2.A.1.2.20) subfamily.

Its subcellular location is the cell inner membrane. The protein is Multidrug resistance protein MdtG of Proteus mirabilis (strain HI4320).